The chain runs to 496 residues: tRNA-2-methylthio-N(6)-dimethylallyladenosine synthase (496 aa).

Residues 10–126 (RTYEVRTYGC…LPALLERARV (117 aa)) enclose the MTTase N-terminal domain. Cysteine 19, cysteine 55, cysteine 89, cysteine 163, cysteine 167, and cysteine 170 together coordinate [4Fe-4S] cluster. One can recognise a Radical SAM core domain in the interval 149–380 (RESAYAAWVS…ALVNEIAWEE (232 aa)). The TRAM domain maps to 382–451 (KRLVGRRVEL…PHHLVADGPV (70 aa)). A disordered region spans residues 465–496 (ARNAAPAPSSGVTLGMPTVGAPAPLPDAPACR). A compositionally biased stretch (pro residues) spans 487–496 (APLPDAPACR).

Belongs to the methylthiotransferase family. MiaB subfamily. In terms of assembly, monomer. It depends on [4Fe-4S] cluster as a cofactor.

It localises to the cytoplasm. It catalyses the reaction N(6)-dimethylallyladenosine(37) in tRNA + (sulfur carrier)-SH + AH2 + 2 S-adenosyl-L-methionine = 2-methylsulfanyl-N(6)-dimethylallyladenosine(37) in tRNA + (sulfur carrier)-H + 5'-deoxyadenosine + L-methionine + A + S-adenosyl-L-homocysteine + 2 H(+). Its function is as follows. Catalyzes the methylthiolation of N6-(dimethylallyl)adenosine (i(6)A), leading to the formation of 2-methylthio-N6-(dimethylallyl)adenosine (ms(2)i(6)A) at position 37 in tRNAs that read codons beginning with uridine. This chain is tRNA-2-methylthio-N(6)-dimethylallyladenosine synthase, found in Nocardioides sp. (strain ATCC BAA-499 / JS614).